A 421-amino-acid polypeptide reads, in one-letter code: Elsinochrome C biosynthesis regulatory protein elcR (421 aa).

Residues 1–16 (MATQLPSPTATTSHSG) show a composition bias toward polar residues. The interval 1 to 20 (MATQLPSPTATTSHSGNEPR) is disordered. The zn(2)-C6 fungal-type DNA-binding region spans 27–54 (CNNCSAQKIRCGKQRPACARCVNKKLQC).

Its subcellular location is the nucleus. Functionally, transcription regulator of the gene cluster that mediates the biosynthesis of elsinochrome C, a perelyenequinone phytotoxin structurally similar to cercosporin. This chain is Elsinochrome C biosynthesis regulatory protein elcR, found in Phaeosphaeria nodorum (strain SN15 / ATCC MYA-4574 / FGSC 10173) (Glume blotch fungus).